A 323-amino-acid chain; its full sequence is Acetyl esterase (323 aa).

An Involved in the stabilization of the negatively charged intermediate by the formation of the oxyanion hole motif is present at residues 91-93 (HGG). Residues serine 165, aspartate 262, and histidine 292 contribute to the active site.

It belongs to the 'GDXG' lipolytic enzyme family. Homodimer. Interacts with MalT and MelA.

The protein localises to the cytoplasm. Functionally, displays esterase activity towards short chain fatty esters (acyl chain length of up to 8 carbons). Able to hydrolyze triacetylglycerol (triacetin) and tributyrylglycerol (tributyrin), but not trioleylglycerol (triolein) or cholesterol oleate. Negatively regulates MalT activity by antagonizing maltotriose binding. Inhibits MelA galactosidase activity. This Salmonella paratyphi A (strain AKU_12601) protein is Acetyl esterase.